We begin with the raw amino-acid sequence, 503 residues long: Cytochrome P450 11B1, mitochondrial (503 aa).

The N-terminal 24 residues, 1–24 (MALRAKAEVCMAVPWLSLQRAQAL), are a transit peptide targeting the mitochondrion. Cysteine 450 contributes to the heme binding site.

Belongs to the cytochrome P450 family. Requires heme as cofactor. As to expression, expressed in the zona fasciculata/reticularis of the adrenal cortex.

Its subcellular location is the mitochondrion inner membrane. It carries out the reaction a steroid + 2 reduced [adrenodoxin] + O2 + 2 H(+) = an 11beta-hydroxysteroid + 2 oxidized [adrenodoxin] + H2O. The enzyme catalyses 11-deoxycortisol + 2 reduced [adrenodoxin] + O2 + 2 H(+) = cortisol + 2 oxidized [adrenodoxin] + H2O. It catalyses the reaction 21-hydroxyprogesterone + 2 reduced [adrenodoxin] + O2 + 2 H(+) = corticosterone + 2 oxidized [adrenodoxin] + H2O. It participates in steroid biosynthesis; glucocorticoid biosynthesis. Its pathway is steroid hormone biosynthesis. In terms of biological role, a cytochrome P450 monooxygenase involved in the biosynthesis of adrenal corticoids. Catalyzes a variety of reactions that are essential for many species, including detoxification, defense, and the formation of endogenous chemicals like steroid hormones. Steroid 11beta, 18- and 19-hydroxylase with preferred regioselectivity at 11beta, then 18, and lastly 19. Catalyzes the hydroxylation of 11-deoxycortisol and 11-deoxycorticosterone (21-hydroxyprogesterone) at 11beta position, yielding cortisol or corticosterone, respectively, but cannot produce aldosterone. Mechanistically, uses molecular oxygen inserting one oxygen atom into a substrate for hydroxylation and reducing the second into a water molecule. Two electrons are provided by NADPH via a two-protein mitochondrial transfer system comprising flavoprotein FDXR (adrenodoxin/ferredoxin reductase) and nonheme iron-sulfur protein FDX1 or FDX2 (adrenodoxin/ferredoxin). Due to its lack of 18-oxidation activity, it is incapable of generating aldosterone. Could also be involved in the androgen metabolic pathway. The sequence is that of Cytochrome P450 11B1, mitochondrial from Homo sapiens (Human).